A 333-amino-acid polypeptide reads, in one-letter code: Cytochrome f (333 aa).

A signal peptide spans 1–44 (MRNACTRARLTRTARAMVKTLFIAIASVTFFFTSDLALPQSAAA). Heme is bound by residues Tyr45, Cys66, Cys69, and His70. A helical membrane pass occupies residues 299–318 (VGWLIAFVALVMLAQVMLVL).

It belongs to the cytochrome f family. In terms of assembly, the 4 large subunits of the cytochrome b6-f complex are cytochrome b6, subunit IV (17 kDa polypeptide, PetD), cytochrome f and the Rieske protein, while the 4 small subunits are PetG, PetL, PetM and PetN. The complex functions as a dimer. The cofactor is heme.

It is found in the cellular thylakoid membrane. Its function is as follows. Component of the cytochrome b6-f complex, which mediates electron transfer between photosystem II (PSII) and photosystem I (PSI), cyclic electron flow around PSI, and state transitions. The chain is Cytochrome f from Trichormus variabilis (strain ATCC 29413 / PCC 7937) (Anabaena variabilis).